A 225-amino-acid polypeptide reads, in one-letter code: Membrane protein (225 aa).

The Virion surface portion of the chain corresponds to 1–20 (MDNTTNCTLGTEQAVQLFKE). Residues 21–41 (YNLFVTAFLLFLTILLQYGYA) form a helical membrane-spanning segment. Residues 42-51 (TRNKVIYILK) lie on the Intravirion side of the membrane. Residues 52–72 (MIVLWCFWPLNIAVGAISCIY) form a helical membrane-spanning segment. Residues 73–77 (PPNTG) are Virion surface-facing. Residues 78–98 (GLVAAIILTVFACLSFIGYWI) form a helical membrane-spanning segment. Residues 99-225 (QSFRLFKRCR…VATGGSSLYT (127 aa)) are Intravirion-facing.

This sequence belongs to the gammacoronaviruses M protein family. As to quaternary structure, homomultimer. Interacts with envelope E protein in the budding compartment of the host cell, which is located between endoplasmic reticulum and the Golgi complex. Forms a complex with HE and S proteins. Interacts with nucleocapsid N protein. This interaction probably participates in RNA packaging into the virus.

The protein resides in the virion membrane. It is found in the host Golgi apparatus membrane. Its function is as follows. Component of the viral envelope that plays a central role in virus morphogenesis and assembly via its interactions with other viral proteins. The sequence is that of Membrane protein from Avian infectious bronchitis virus (strain 6/82) (IBV).